Consider the following 188-residue polypeptide: Peptidyl-tRNA hydrolase (188 aa).

Tyr14 contacts tRNA. His19 functions as the Proton acceptor in the catalytic mechanism. Residues Tyr64, Asn66, and Asn112 each coordinate tRNA.

Belongs to the PTH family. In terms of assembly, monomer.

The protein resides in the cytoplasm. The catalysed reaction is an N-acyl-L-alpha-aminoacyl-tRNA + H2O = an N-acyl-L-amino acid + a tRNA + H(+). Its function is as follows. Hydrolyzes ribosome-free peptidyl-tRNAs (with 1 or more amino acids incorporated), which drop off the ribosome during protein synthesis, or as a result of ribosome stalling. Catalyzes the release of premature peptidyl moieties from peptidyl-tRNA molecules trapped in stalled 50S ribosomal subunits, and thus maintains levels of free tRNAs and 50S ribosomes. The sequence is that of Peptidyl-tRNA hydrolase from Bacillus licheniformis (strain ATCC 14580 / DSM 13 / JCM 2505 / CCUG 7422 / NBRC 12200 / NCIMB 9375 / NCTC 10341 / NRRL NRS-1264 / Gibson 46).